The chain runs to 90 residues: Acylphosphatase (90 aa).

Residues 3 to 90 enclose the Acylphosphatase-like domain; that stretch reads KKQFIVYGLV…REFTDFSVRY (88 aa). Active-site residues include Arg-18 and Asn-36.

Belongs to the acylphosphatase family.

The enzyme catalyses an acyl phosphate + H2O = a carboxylate + phosphate + H(+). The protein is Acylphosphatase (acyP) of Pasteurella multocida (strain Pm70).